Here is a 135-residue protein sequence, read N- to C-terminus: Large ribosomal subunit protein uL16 (135 aa).

It belongs to the universal ribosomal protein uL16 family. In terms of assembly, part of the 50S ribosomal subunit.

Its function is as follows. Binds 23S rRNA and is also seen to make contacts with the A and possibly P site tRNAs. The polypeptide is Large ribosomal subunit protein uL16 (rplP) (Carsonella ruddii (strain PV)).